Here is a 260-residue protein sequence, read N- to C-terminus: Thiazole synthase (260 aa).

Lys-96 acts as the Schiff-base intermediate with DXP in catalysis. 1-deoxy-D-xylulose 5-phosphate contacts are provided by residues Gly-157, 184 to 185 (AG), and 206 to 207 (NT).

Belongs to the ThiG family. Homotetramer. Forms heterodimers with either ThiH or ThiS.

It localises to the cytoplasm. It carries out the reaction [ThiS sulfur-carrier protein]-C-terminal-Gly-aminoethanethioate + 2-iminoacetate + 1-deoxy-D-xylulose 5-phosphate = [ThiS sulfur-carrier protein]-C-terminal Gly-Gly + 2-[(2R,5Z)-2-carboxy-4-methylthiazol-5(2H)-ylidene]ethyl phosphate + 2 H2O + H(+). The protein operates within cofactor biosynthesis; thiamine diphosphate biosynthesis. Its function is as follows. Catalyzes the rearrangement of 1-deoxy-D-xylulose 5-phosphate (DXP) to produce the thiazole phosphate moiety of thiamine. Sulfur is provided by the thiocarboxylate moiety of the carrier protein ThiS. In vitro, sulfur can be provided by H(2)S. The sequence is that of Thiazole synthase from Rhodopseudomonas palustris (strain BisB18).